A 507-amino-acid polypeptide reads, in one-letter code: Chromosomal replication initiator protein DnaA (507 aa).

Residues 1–112 are domain I, interacts with DnaA modulators; the sequence is MTDDPGSGFT…PATDEADDTT (112 aa). Positions 99-162 are disordered; that stretch reads RIAPPATDEA…ERPRNTDSAT (64 aa). The segment covering 113-127 has biased composition (polar residues); that stretch reads VPPSENPATTSPDTT. The tract at residues 113–166 is domain II; it reads VPPSENPATTSPDTTTDNDEIDDSAAARGDNQHSWPSYFTERPRNTDSATAGVT. The tract at residues 167–383 is domain III, AAA+ region; it reads SLNRRYTFDT…GALIRVTAFA (217 aa). ATP contacts are provided by Gly211, Gly213, Lys214, and Thr215. The tract at residues 384 to 507 is domain IV, binds dsDNA; it reads SLNKTPIDKA…TTRIRQRSKR (124 aa).

Belongs to the DnaA family. Oligomerizes as a right-handed, spiral filament on DNA at oriC.

It is found in the cytoplasm. In terms of biological role, plays an essential role in the initiation and regulation of chromosomal replication. ATP-DnaA binds to the origin of replication (oriC) to initiate formation of the DNA replication initiation complex once per cell cycle. Binds the DnaA box (a 9 base pair repeat at the origin) and separates the double-stranded (ds)DNA. Forms a right-handed helical filament on oriC DNA; dsDNA binds to the exterior of the filament while single-stranded (ss)DNA is stabiized in the filament's interior. The ATP-DnaA-oriC complex binds and stabilizes one strand of the AT-rich DNA unwinding element (DUE), permitting loading of DNA polymerase. After initiation quickly degrades to an ADP-DnaA complex that is not apt for DNA replication. Binds acidic phospholipids. The chain is Chromosomal replication initiator protein DnaA from Mycobacterium bovis (strain ATCC BAA-935 / AF2122/97).